Reading from the N-terminus, the 271-residue chain is Formamidopyrimidine-DNA glycosylase (271 aa).

The Schiff-base intermediate with DNA role is filled by Pro-2. Glu-3 (proton donor) is an active-site residue. The Proton donor; for beta-elimination activity role is filled by Lys-57. His-90, Arg-109, and Lys-151 together coordinate DNA. The FPG-type zinc-finger motif lies at 236-270; sequence HVYSRGGETCTSCGNLLSEIRLGQRTTVFCGICQT. The active-site Proton donor; for delta-elimination activity is the Arg-260.

It belongs to the FPG family. As to quaternary structure, monomer. Zn(2+) serves as cofactor.

The catalysed reaction is Hydrolysis of DNA containing ring-opened 7-methylguanine residues, releasing 2,6-diamino-4-hydroxy-5-(N-methyl)formamidopyrimidine.. The enzyme catalyses 2'-deoxyribonucleotide-(2'-deoxyribose 5'-phosphate)-2'-deoxyribonucleotide-DNA = a 3'-end 2'-deoxyribonucleotide-(2,3-dehydro-2,3-deoxyribose 5'-phosphate)-DNA + a 5'-end 5'-phospho-2'-deoxyribonucleoside-DNA + H(+). Functionally, involved in base excision repair of DNA damaged by oxidation or by mutagenic agents. Acts as a DNA glycosylase that recognizes and removes damaged bases. Has a preference for oxidized purines, such as 7,8-dihydro-8-oxoguanine (8-oxoG). Has AP (apurinic/apyrimidinic) lyase activity and introduces nicks in the DNA strand. Cleaves the DNA backbone by beta-delta elimination to generate a single-strand break at the site of the removed base with both 3'- and 5'-phosphates. The polypeptide is Formamidopyrimidine-DNA glycosylase (Shewanella baltica (strain OS195)).